The sequence spans 285 residues: Polyamine aminopropyltransferase (285 aa).

One can recognise a PABS domain in the interval 5–241 (DNWYIEHFQP…GWWSVTMASK (237 aa)). Glutamine 35 is a binding site for S-methyl-5'-thioadenosine. Positions 66 and 90 each coordinate spermidine. S-methyl-5'-thioadenosine contacts are provided by residues aspartate 110 and 141–142 (DG). The active-site Proton acceptor is the aspartate 160. Spermidine is bound at residue 160-163 (DSTD). Proline 167 provides a ligand contact to S-methyl-5'-thioadenosine.

The protein belongs to the spermidine/spermine synthase family. In terms of assembly, homodimer or homotetramer.

The protein localises to the cytoplasm. The enzyme catalyses S-adenosyl 3-(methylsulfanyl)propylamine + putrescine = S-methyl-5'-thioadenosine + spermidine + H(+). Its pathway is amine and polyamine biosynthesis; spermidine biosynthesis; spermidine from putrescine: step 1/1. Its function is as follows. Catalyzes the irreversible transfer of a propylamine group from the amino donor S-adenosylmethioninamine (decarboxy-AdoMet) to putrescine (1,4-diaminobutane) to yield spermidine. This Xanthomonas axonopodis pv. citri (strain 306) protein is Polyamine aminopropyltransferase.